A 119-amino-acid polypeptide reads, in one-letter code: Large ribosomal subunit protein bL20 (119 aa).

This sequence belongs to the bacterial ribosomal protein bL20 family.

Binds directly to 23S ribosomal RNA and is necessary for the in vitro assembly process of the 50S ribosomal subunit. It is not involved in the protein synthesizing functions of that subunit. The sequence is that of Large ribosomal subunit protein bL20 from Streptococcus suis (strain 98HAH33).